The following is a 196-amino-acid chain: RNA-binding protein with multiple splicing (196 aa).

Methionine 1 carries the post-translational modification N-acetylmethionine. At threonine 12 the chain carries Phosphothreonine. The 78-residue stretch at 24–101 folds into the RRM domain; sequence RTLFVSGLPL…QTLRLEFAKA (78 aa). Positions 98–105 are interaction with RNA; that stretch reads FAKANTKM. At threonine 113 the chain carries Phosphothreonine.

As to quaternary structure, homodimer; each protein chain binds one RNA molecule via the external surface of the homodimer. Interacts with RNA binding proteins MBNL1, RBFOX2, RBM4 and RBM14; the interaction allows cooperative assembly of stable cell-specific alternative splicing regulatory complexes. Interacts with SMAD2, SMAD3 and SMAD4; the interactions are direct. Ubiquitously expressed, at various levels depending on the isoform and the tissue. Strongly expressed in the heart, prostate, small intestine, large intestine, and ovary; moderately expressed in the placenta, lung, liver, kidney, pancreas, and testis; and poorly expressed in the skeletal muscle, spleen, thymus and peripheral leukocytes.

It localises to the nucleus. It is found in the cytoplasm. The protein resides in the stress granule. Its subcellular location is the P-body. In terms of biological role, RNA binding protein that mediates the regulation of pre-mRNA alternative splicing (AS). Acts either as activator (FLNB, HSPG2, LIPA1, MYOCD, PTPRF and PPFIBP1) or repressor (TPM1, ACTN1, ITGA7, PIEZO1, LSM14B, MBNL1 and MBML2) of splicing events on specific pre-mRNA targets. Together with RNA binding proteins RBFOX2 and MBNL1/2, activates a splicing program associated with differentiated contractile vascular smooth muscle cells (SMC) by regulating AS of numerous pre-mRNA involved in actin cytoskeleton and focal adhesion machineries, suggesting a role in promoting a cell differentiated state. Binds to introns, exons and 3'-UTR associated with tandem CAC trinucleotide motifs separated by a variable spacer region, at a minimum as a dimer. The minimal length of RNA required for RBPMS-binding tandem CAC motifs is 15 nt, with spacing ranging from 1 to 9 nt. Can also bind to CA dinucleotide repeats. Mediates repression of TPM1 exon 3 by binding to CAC tandem repeats in the flanking intronic regions, followed by higher-order oligomerization and heterotypic interactions with other splicing regulators including MBNL1 and RBFOX2, which prevents assembly of ATP-dependent splicing complexes. Functionally, acts as a regulator of pre-mRNA alternative splicing (AS). Binds mRNA. Regulates AS of ACTN1, FLNB, although with lower efficiency than isoform A / RBPMSA. Acts as coactivator of SMAD transcriptional activity in a TGFB1-dependent manner, possibly through increased phosphorylation of SMAD2 and SMAD3 at the C-terminal SSXS regions and promotion of the nuclear accumulation of SMAD proteins. The protein is RNA-binding protein with multiple splicing of Homo sapiens (Human).